Here is a 199-residue protein sequence, read N- to C-terminus: Photosystem II D1 precursor processing protein PSB27-H2, chloroplastic (199 aa).

This sequence belongs to the Psb27 family. In terms of assembly, interacts with the C-terminus of both the precursor and mature form of D1.

Its subcellular location is the plastid. The protein localises to the chloroplast thylakoid lumen. Functionally, required, but not essential, for D1 (psbA) precursor processing and thus correct photosystem II assembly (PSII). The chain is Photosystem II D1 precursor processing protein PSB27-H2, chloroplastic (PSB27-2) from Arabidopsis thaliana (Mouse-ear cress).